The following is a 494-amino-acid chain: ATP synthase subunit beta, plastid (494 aa).

Position 169–176 (169–176 (GGAGVGKT)) interacts with ATP.

It belongs to the ATPase alpha/beta chains family. F-type ATPases have 2 components, CF(1) - the catalytic core - and CF(0) - the membrane proton channel. CF(1) has five subunits: alpha(3), beta(3), gamma(1), delta(1), epsilon(1). CF(0) has four main subunits: a(1), b(1), b'(1) and c(9-12).

The protein localises to the plastid membrane. The enzyme catalyses ATP + H2O + 4 H(+)(in) = ADP + phosphate + 5 H(+)(out). Produces ATP from ADP in the presence of a proton gradient across the membrane. The catalytic sites are hosted primarily by the beta subunits. This Cuscuta sandwichiana (Kauna'oa) protein is ATP synthase subunit beta, plastid (atpB).